The chain runs to 205 residues: GTP cyclohydrolase-2 (205 aa).

A GTP-binding site is contributed by 49–53 (RVHSE). Zn(2+) is bound by residues C54, C65, and C67. Residues Q70, 92–94 (EGR), and T114 each bind GTP. The active-site Proton acceptor is the D126. The Nucleophile role is filled by R128. GTP-binding residues include T149 and K154.

The protein belongs to the GTP cyclohydrolase II family. Zn(2+) is required as a cofactor.

It carries out the reaction GTP + 4 H2O = 2,5-diamino-6-hydroxy-4-(5-phosphoribosylamino)-pyrimidine + formate + 2 phosphate + 3 H(+). The protein operates within cofactor biosynthesis; riboflavin biosynthesis; 5-amino-6-(D-ribitylamino)uracil from GTP: step 1/4. Catalyzes the conversion of GTP to 2,5-diamino-6-ribosylamino-4(3H)-pyrimidinone 5'-phosphate (DARP), formate and pyrophosphate. The protein is GTP cyclohydrolase-2 of Pseudomonas fluorescens (strain SBW25).